Reading from the N-terminus, the 416-residue chain is Probable F-box protein At5g47300 (416 aa).

Residues 40–86 (TLMLSDLPGDLLEEILCRVPATSLKQLRSTCKQWNNLFNNGRFTRKH) form the F-box domain.

The polypeptide is Probable F-box protein At5g47300 (Arabidopsis thaliana (Mouse-ear cress)).